Consider the following 153-residue polypeptide: UPF0756 membrane protein BCB4264_A4705 (153 aa).

4 helical membrane-spanning segments follow: residues 8 to 28 (FLFILLIIGLIAKNQSLTVAI), 54 to 74 (LGVTVITIAVLVPIATGEIGF), 87 to 107 (WIALASGVAVALLAKGGVQLL), and 117 to 137 (LVFGTVIAVALFNGVAVGPLI).

Belongs to the UPF0756 family.

The protein resides in the cell membrane. In Bacillus cereus (strain B4264), this protein is UPF0756 membrane protein BCB4264_A4705.